The sequence spans 499 residues: Lipopolysaccharide core galacturonosyltransferase RgtA (499 aa).

Transmembrane regions (helical) follow at residues 11-31, 74-94, 103-123, 125-145, 165-185, 199-219, 248-268, 291-311, 316-336, and 351-371; these read TAGLLLAAYFVLNIVLRIVLP, IGALIVPKNILLFLSYLFYGL, EALAAVGMLALITLPQVSYMA, QDLTHTTALLFASSLFLYGFF, IGLISKYNFALMPVVALIAIL, MLAAITVALVIVLPHAVWLQG, LLAFLVAIIAFAALPVVIFAA, MMLASLAGIALIVLFTGSTTV, LDPFLLVLPIYFLAKMQAAGL, and VLMACVLIALGFRVVGAGLIG.

This sequence belongs to the glycosyltransferase 83 family.

The protein localises to the cell inner membrane. Its pathway is bacterial outer membrane biogenesis; LPS core biosynthesis. In terms of biological role, involved in the modification of the lipopolysaccharide (LPS) inner core. Catalyzes the transfer of a galacturonic acid (GalA) residue to the 4-position of the outer Kdo (3-deoxy-D-manno-octulosonic acid) residue of the LPS inner core, using dodecaprenyl phosphate-GalA as the donor substrate. GalA addition by RgtA is required for RgtB activity. The sequence is that of Lipopolysaccharide core galacturonosyltransferase RgtA from Rhizobium johnstonii (strain DSM 114642 / LMG 32736 / 3841) (Rhizobium leguminosarum bv. viciae).